Consider the following 224-residue polypeptide: UPF0111 protein TC_0063 (224 aa).

The protein belongs to the UPF0111 family.

The sequence is that of UPF0111 protein TC_0063 from Chlamydia muridarum (strain MoPn / Nigg).